We begin with the raw amino-acid sequence, 1872 residues long: Ral GTPase-activating protein subunit alpha-2 (1872 aa).

Phosphoserine is present on residues S373, S376, and S379. Basic and acidic residues predominate over residues 446–469 (DKKDVAEEDADKLGLSETDSKEVS). The disordered stretch occupies residues 446 to 481 (DKKDVAEEDADKLGLSETDSKEVSSESSGHKRSSSW). Phosphoserine is present on residues S486 and S696. Disordered regions lie at residues 711–730 (FRSA…NTVR) and 758–849 (QPVP…TGSD). T715 is modified (phosphothreonine; by PKB). Polar residues predominate over residues 775–795 (SDSSQGQKVENSQNLSSSEPK). Residues 796–810 (SVQESKGHVTHEHEG) are compositionally biased toward basic and acidic residues. Phosphoserine occurs at positions 819 and 820. Basic and acidic residues predominate over residues 824 to 843 (LDLKEESQQTHGRCRERQKS). Residue S1592 is modified to Phosphoserine. The Rap-GAP domain maps to 1634-1842 (LKNLDSRQCR…EERALYLEAI (209 aa)).

In terms of assembly, component of the heterodimeric RalGAP2 complex with RALGAPB. Heterodimerization is required for activity. As to expression, highly expressed in lung, liver, testis and thymus with lower levels in brain and heart (at protein level).

It is found in the cytoplasm. Catalytic subunit of the heterodimeric RalGAP2 complex which acts as a GTPase activator for the Ras-like small GTPases RALA and RALB. The protein is Ral GTPase-activating protein subunit alpha-2 of Rattus norvegicus (Rat).